Reading from the N-terminus, the 440-residue chain is Adenylyltransferase and sulfurtransferase UBA4 (440 aa).

At M1 the chain carries N-acetylmethionine. ATP-binding positions include G77, D98, 105 to 109 (SNLHR), K122, and 166 to 167 (DS). Residues C208 and C211 each contribute to the Zn(2+) site. C225 acts as the Glycyl thioester intermediate; for adenylyltransferase activity in catalysis. C286 and C289 together coordinate Zn(2+). S326 is modified (phosphoserine). Residues 339–438 (FLAKHIFLDV…YIDDIDQTIP (100 aa)) enclose the Rhodanese domain. Catalysis depends on C397, which acts as the Cysteine persulfide intermediate; for sulfurtransferase activity.

This sequence in the N-terminal section; belongs to the HesA/MoeB/ThiF family. UBA4 subfamily. The cofactor is Zn(2+).

Its subcellular location is the cytoplasm. It localises to the cytosol. The protein operates within tRNA modification; 5-methoxycarbonylmethyl-2-thiouridine-tRNA biosynthesis. In terms of biological role, plays a central role in 2-thiolation of mcm(5)S(2)U at tRNA wobble positions of cytosolic tRNA(Lys), tRNA(Glu) and tRNA(Gln). Acts by mediating the C-terminal thiocarboxylation of sulfur carrier URM1. Its N-terminus first activates URM1 as acyl-adenylate (-COAMP), then the persulfide sulfur on the catalytic cysteine is transferred to URM1 to form thiocarboxylation (-COSH) of its C-terminus. The reaction probably involves hydrogen sulfide that is generated from the persulfide intermediate and that acts as a nucleophile towards URM1. Subsequently, a transient disulfide bond is formed. Does not use thiosulfate as sulfur donor; NFS1 probably acting as a sulfur donor for thiocarboxylation reactions. Prior mcm(5) tRNA modification by the elongator complex is required for 2-thiolation. May also be involved in protein urmylation. The chain is Adenylyltransferase and sulfurtransferase UBA4 from Saccharomyces cerevisiae (strain YJM789) (Baker's yeast).